Reading from the N-terminus, the 391-residue chain is Cytochrome b (391 aa).

4 helical membrane passes run 33-53, 77-98, 113-133, and 178-198; these read FGSL…FLAM, WLIR…YLHI, WSAG…GYVL, and FFAF…VHLL. The heme b site is built by His-83 and His-97. His-182 and His-196 together coordinate heme b. An a ubiquinone-binding site is contributed by His-201. 4 helical membrane-spanning segments follow: residues 226–246, 288–308, 320–340, and 347–367; these read YKDL…VLFI, LGGV…PILH, LAQI…WIGG, and FIII…VFFP.

It belongs to the cytochrome b family. The cytochrome bc1 complex contains 3 respiratory subunits (MT-CYB, CYC1 and UQCRFS1), 2 core proteins (UQCRC1 and UQCRC2) and probably 6 low-molecular weight proteins. Heme b is required as a cofactor.

The protein localises to the mitochondrion inner membrane. Functionally, component of the ubiquinol-cytochrome c reductase complex (complex III or cytochrome b-c1 complex) that is part of the mitochondrial respiratory chain. The b-c1 complex mediates electron transfer from ubiquinol to cytochrome c. Contributes to the generation of a proton gradient across the mitochondrial membrane that is then used for ATP synthesis. The sequence is that of Cytochrome b (mt-cyb) from Kryptolebias marmoratus (Mangrove killifish).